A 124-amino-acid polypeptide reads, in one-letter code: Small ribosomal subunit protein bS6 (124 aa).

A disordered region spans residues 99–124 (PLPAPRVMPGSEAAQQQQAEAAASAD). The segment covering 109 to 124 (SEAAQQQQAEAAASAD) has biased composition (low complexity).

It belongs to the bacterial ribosomal protein bS6 family.

In terms of biological role, binds together with bS18 to 16S ribosomal RNA. This chain is Small ribosomal subunit protein bS6, found in Synechococcus sp. (strain CC9605).